A 309-amino-acid chain; its full sequence is Ribonuclease Z (309 aa).

The Zn(2+) site is built by His-63, His-65, Asp-67, His-68, His-141, Asp-212, and His-270. Asp-67 (proton acceptor) is an active-site residue.

It belongs to the RNase Z family. In terms of assembly, homodimer. It depends on Zn(2+) as a cofactor.

The catalysed reaction is Endonucleolytic cleavage of RNA, removing extra 3' nucleotides from tRNA precursor, generating 3' termini of tRNAs. A 3'-hydroxy group is left at the tRNA terminus and a 5'-phosphoryl group is left at the trailer molecule.. In terms of biological role, zinc phosphodiesterase, which displays some tRNA 3'-processing endonuclease activity. Probably involved in tRNA maturation, by removing a 3'-trailer from precursor tRNA. This is Ribonuclease Z from Lactobacillus delbrueckii subsp. bulgaricus (strain ATCC 11842 / DSM 20081 / BCRC 10696 / JCM 1002 / NBRC 13953 / NCIMB 11778 / NCTC 12712 / WDCM 00102 / Lb 14).